The following is an 810-amino-acid chain: Probable inorganic carbon transporter subunit DabA (810 aa).

Zn(2+)-binding residues include Cys347, Asp349, His509, and Cys524.

Belongs to the inorganic carbon transporter (TC 9.A.2) DabA family. As to quaternary structure, forms a complex with DabB. It depends on Zn(2+) as a cofactor.

The protein localises to the cell inner membrane. In terms of biological role, part of an energy-coupled inorganic carbon pump. The protein is Probable inorganic carbon transporter subunit DabA of Marinomonas sp. (strain MWYL1).